A 473-amino-acid polypeptide reads, in one-letter code: Ribulose bisphosphate carboxylase large chain 2 (473 aa).

Substrate-binding residues include N116 and T166. The active-site Proton acceptor is K168. Residue K170 participates in substrate binding. Residues K194, D196, and E197 each coordinate Mg(2+). K194 carries the post-translational modification N6-carboxylysine. The active-site Proton acceptor is H287. Residues R288, H320, and S372 each coordinate substrate.

The protein belongs to the RuBisCO large chain family. Type I subfamily. Heterohexadecamer of 8 large chains and 8 small chains. Mg(2+) is required as a cofactor.

The catalysed reaction is 2 (2R)-3-phosphoglycerate + 2 H(+) = D-ribulose 1,5-bisphosphate + CO2 + H2O. It catalyses the reaction D-ribulose 1,5-bisphosphate + O2 = 2-phosphoglycolate + (2R)-3-phosphoglycerate + 2 H(+). RuBisCO catalyzes two reactions: the carboxylation of D-ribulose 1,5-bisphosphate, the primary event in carbon dioxide fixation, as well as the oxidative fragmentation of the pentose substrate. Both reactions occur simultaneously and in competition at the same active site. The chain is Ribulose bisphosphate carboxylase large chain 2 from Acidithiobacillus ferrooxidans (Thiobacillus ferrooxidans).